The following is a 144-amino-acid chain: 3-hydroxyacyl-[acyl-carrier-protein] dehydratase FabZ (144 aa).

His51 is an active-site residue.

This sequence belongs to the thioester dehydratase family. FabZ subfamily.

It localises to the cytoplasm. The enzyme catalyses a (3R)-hydroxyacyl-[ACP] = a (2E)-enoyl-[ACP] + H2O. Functionally, involved in unsaturated fatty acids biosynthesis. Catalyzes the dehydration of short chain beta-hydroxyacyl-ACPs and long chain saturated and unsaturated beta-hydroxyacyl-ACPs. The polypeptide is 3-hydroxyacyl-[acyl-carrier-protein] dehydratase FabZ (Lactococcus lactis subsp. cremoris (strain SK11)).